The following is a 323-amino-acid chain: MAPFVPYHSSAGQATIVKFGGLLTTEFLEPPPGRCFLFRQTYRHTVEGPIPENLRKLINSPHKPKGPPPHFHQFQTEYFRVETGVLGIEVDGVLRRITPEDGEISVKAGSVHRFFIHPDSPESMTVYLSASDSGNDYQLDRIFFENWYGYWHDALLHDGGIDWIQFLAIQDGGDAYTPAPAWVPFRRQVGYWTCVIVGRWIGGLLGYKPFFREYTTDWDFAVAKMKGSVFQRHLVHEAFGAEKSWKQQTELEARVKPENAEFEQWTEDMSPTPLMLKPLAYEAGEFKGLQDQSANGVNGHATGVEAKKKQLGDMTRRRSGAQE.

Residues 291–323 are disordered; sequence DQSANGVNGHATGVEAKKKQLGDMTRRRSGAQE. A compositionally biased stretch (basic and acidic residues) spans 305 to 316; it reads EAKKKQLGDMTR.

This sequence belongs to the oxidoreductase OpS7 family.

It is found in the vacuole lumen. The protein resides in the cytoplasmic vesicle lumen. It functions in the pathway mycotoxin biosynthesis; patulin biosynthesis. In terms of biological role, probable oxidoreductase; part of the gene cluster that mediates the biosynthesis of patulin, an acetate-derived tetraketide mycotoxin produced by several fungal species that shows antimicrobial properties against several bacteria. PatJ acts with patO in the vacuole to convert gentisyl alcohol to isoepoxydon. The pathway begins with the synthesis of 6-methylsalicylic acid by the polyketide synthase (PKS) patK via condensation of acetate and malonate units. The 6-methylsalicylic acid decarboxylase patG then catalyzes the decarboxylation of 6-methylsalicylic acid to yield m-cresol (also known as 3-methylphenol). These first reactions occur in the cytosol. The intermediate m-cresol is then transported into the endoplasmic reticulum where the cytochrome P450 monooxygenase patH converts it to m-hydroxybenzyl alcohol, which is further converted to gentisyl alcohol by the cytochrome P450 monooxygenase patI. The oxidoreductases patJ and patO further convert gentisyl alcohol to isoepoxydon in the vacuole. PatN catalyzes then the transformation of isoepoxydon into phyllostine. The cluster protein patF is responsible for the conversion from phyllostine to neopatulin whereas the alcohol dehydrogenase patD converts neopatulin to E-ascladiol. The steps between isoepoxydon and E-ascladiol occur in the cytosol, and E-ascladiol is probably secreted to the extracellular space by one of the cluster-specific transporters patC or patM. Finally, the secreted patulin synthase patE catalyzes the conversion of E-ascladiol to patulin. The chain is Probable oxidoreductase patJ from Aspergillus clavatus (strain ATCC 1007 / CBS 513.65 / DSM 816 / NCTC 3887 / NRRL 1 / QM 1276 / 107).